Here is a 410-residue protein sequence, read N- to C-terminus: Monoglucosyldiacylglycerol epimerase (410 aa).

Residues 1 to 14 form the signal peptide; that stretch reads MAMAWLMGLGLALA. A run of 2 helical transmembrane segments spans residues 71–91 and 96–116; these read ALVM…WQGF and LILA…SAIA. The active-site Proton acceptor is Tyr-320. Residues 380 to 400 traverse the membrane as a helical segment; sequence IIVTINPITFIAFPVKEFFVS.

This sequence belongs to the short-chain dehydrogenases/reductases (SDR) family.

It is found in the membrane. It catalyses the reaction a 1,2-diacyl-3-O-(beta-D-glucopyranosyl)-sn-glycerol = a 1,2-diacyl-3-O-(beta-D-galactosyl)-sn-glycerol. Its function is as follows. Involved in the biosynthesis of galactolipids found in the photosynthetic membranes. Catalyzes the isomerization of monoglucosyldiacylglycerol (GlcDG) to yield monogalactosyldiacylglycerol (MGDG). The protein is Monoglucosyldiacylglycerol epimerase of Synechocystis sp. (strain ATCC 27184 / PCC 6803 / Kazusa).